A 279-amino-acid chain; its full sequence is Undecaprenyl-diphosphatase (279 aa).

A run of 8 helical transmembrane segments spans residues 2 to 22 (LFIE…TEWL), 44 to 64 (AFME…VIVI), 85 to 105 (WQLW…AVPL), 113 to 133 (FNHM…FLWI), 163 to 183 (VLSI…AIIL), 188 to 208 (TVAA…YSGL), 225 to 245 (LLVL…VIKL), and 255 to 275 (FTVF…YSVF).

The protein belongs to the UppP family.

It localises to the cell membrane. The enzyme catalyses di-trans,octa-cis-undecaprenyl diphosphate + H2O = di-trans,octa-cis-undecaprenyl phosphate + phosphate + H(+). In terms of biological role, catalyzes the dephosphorylation of undecaprenyl diphosphate (UPP). Confers resistance to bacitracin. In Streptococcus equi subsp. equi (strain 4047), this protein is Undecaprenyl-diphosphatase.